Here is a 213-residue protein sequence, read N- to C-terminus: Superoxide dismutase [Mn] (213 aa).

Residues His-27, His-82, Asp-168, and His-172 each coordinate Mn(2+).

This sequence belongs to the iron/manganese superoxide dismutase family. In terms of assembly, homodimer. Mn(2+) serves as cofactor.

It carries out the reaction 2 superoxide + 2 H(+) = H2O2 + O2. Functionally, destroys superoxide anion radicals which are normally produced within the cells and which are toxic to biological systems. In Mannheimia haemolytica (Pasteurella haemolytica), this protein is Superoxide dismutase [Mn] (sodA).